A 123-amino-acid polypeptide reads, in one-letter code: Putative membrane protein insertion efficiency factor (123 aa).

It belongs to the UPF0161 family.

Its subcellular location is the cell inner membrane. Its function is as follows. Could be involved in insertion of integral membrane proteins into the membrane. This chain is Putative membrane protein insertion efficiency factor, found in Beijerinckia indica subsp. indica (strain ATCC 9039 / DSM 1715 / NCIMB 8712).